The following is a 185-amino-acid chain: HTH-type transcriptional regulator SAB2452 (185 aa).

The region spanning 6 to 66 (IENRQRIEEI…YVIQRDLNTF (61 aa)) is the HTH tetR-type domain. Positions 29–48 (SMNRIAKELGIGMGTLYRHF) form a DNA-binding region, H-T-H motif.

The polypeptide is HTH-type transcriptional regulator SAB2452 (Staphylococcus aureus (strain bovine RF122 / ET3-1)).